The following is a 198-amino-acid chain: UPF0314 protein Atu8092 (198 aa).

The next 3 helical transmembrane spans lie at 14–34 (LRWF…LYAM), 64–84 (WYTP…WLLF), and 150–170 (VPVW…GWLI).

It belongs to the UPF0314 family.

It is found in the cell membrane. This Agrobacterium fabrum (strain C58 / ATCC 33970) (Agrobacterium tumefaciens (strain C58)) protein is UPF0314 protein Atu8092.